The following is a 570-amino-acid chain: Phosphoenolpyruvate-protein phosphotransferase (570 aa).

The active-site Tele-phosphohistidine intermediate is histidine 189. Phosphoenolpyruvate is bound by residues arginine 296 and arginine 332. Mg(2+) contacts are provided by glutamate 431 and aspartate 455. Phosphoenolpyruvate contacts are provided by residues 454 to 455 and arginine 465; that span reads ND. Residue cysteine 502 is the Proton donor of the active site.

This sequence belongs to the PEP-utilizing enzyme family. In terms of assembly, homodimer. Interacts with FloT. The cofactor is Mg(2+).

The protein resides in the cytoplasm. The protein localises to the membrane raft. It carries out the reaction L-histidyl-[protein] + phosphoenolpyruvate = N(pros)-phospho-L-histidyl-[protein] + pyruvate. Its function is as follows. General (non sugar-specific) component of the phosphoenolpyruvate-dependent sugar phosphotransferase system (sugar PTS). This major carbohydrate active-transport system catalyzes the phosphorylation of incoming sugar substrates concomitantly with their translocation across the cell membrane. Enzyme I transfers the phosphoryl group from phosphoenolpyruvate (PEP) to the phosphoryl carrier protein (HPr). This is Phosphoenolpyruvate-protein phosphotransferase (ptsI) from Bacillus subtilis (strain 168).